The following is a 489-amino-acid chain: Otolin-1-A (489 aa).

The signal sequence occupies residues 1–23; sequence MPNILHPFIIIMTLLVVATGNQA. Residues 27-57 are disordered; sequence KTTQWPRMKPTKKPPPRDEGPSKLGSISTTV. Asn109 is a glycosylation site (N-linked (GlcNAc...) asparagine). The disordered stretch occupies residues 133–335; that stretch reads GPVGEKGLPG…PGMKGTRGLK (203 aa). Positions 142 to 151 are enriched in gly residues; it reads GIPGGKGEMG. Collagen-like domains lie at 145 to 204, 205 to 255, and 264 to 323; these read GGKG…KGDK, GDTG…KGDK, and GQKG…PGQR. Over residues 192 to 206 the composition is skewed to basic and acidic residues; it reads QGEKGESGPKGDKGD. The N-linked (GlcNAc...) asparagine glycan is linked to Asn225. Gly residues predominate over residues 226–235; sequence GTKGGMGEPG. Positions 248–257 are enriched in basic and acidic residues; the sequence is IKGEKGDKGD. N-linked (GlcNAc...) asparagine glycosylation is present at Asn287. The span at 290-310 shows a compositional bias: low complexity; the sequence is DGLPGSKGPKGDPGPLSKQGE. Positions 351–488 constitute a C1q domain; sequence AVQKRSAFSV…GFLLYADATK (138 aa). N-linked (GlcNAc...) asparagine glycans are attached at residues Asn391 and Asn396.

Belongs to the OTOL1 family. In terms of assembly, homooligomer; disulfide-linked; probably forms homotrimers. Interacts with otomp.

The protein resides in the secreted. It is found in the extracellular space. The protein localises to the extracellular matrix. Functionally, collagen-like protein, which provides an organic scaffold for otoliths onto the sensory epithelium of the inner ear. Acts as a scaffold for biomineralization by sequestering calcium. In Danio rerio (Zebrafish), this protein is Otolin-1-A (otol1a).